The following is a 155-amino-acid chain: Perlucin (155 aa).

Disulfide bonds link Cys-2-Cys-13, Cys-30-Cys-127, and Cys-102-Cys-119. A C-type lectin domain is found at 9–128 (NRRSCYWFST…CQKPSHFICE (120 aa)). A glycan (N-linked (GlcNAc...) asparagine) is linked at Asn-84. 2 repeat units span residues 136–145 (NSLHANLQQR) and 146–155 (DSLHANLQQR).

In terms of processing, glycosylated.

Its function is as follows. May promote nucleation and/or growth of calcium carbonate crystals. Binds to D-galactose and D-mannose/D-glucose. This chain is Perlucin, found in Haliotis laevigata (Smooth Australian abalone).